The chain runs to 313 residues: D-alanine--D-alanine ligase (313 aa).

In terms of domain architecture, ATP-grasp spans 108-308 (KLVWQQTGVP…YSELVVKVLA (201 aa)). Residue 138–193 (VAKLGLPLFVKPASEGSSVAVLKVKTADALPAALSEAATHDKIVIVEKSIEGGGEY) participates in ATP binding. Mg(2+) contacts are provided by Asp262, Glu275, and Asn277.

It belongs to the D-alanine--D-alanine ligase family. It depends on Mg(2+) as a cofactor. Requires Mn(2+) as cofactor.

It is found in the cytoplasm. The enzyme catalyses 2 D-alanine + ATP = D-alanyl-D-alanine + ADP + phosphate + H(+). It participates in cell wall biogenesis; peptidoglycan biosynthesis. Cell wall formation. This Burkholderia ambifaria (strain ATCC BAA-244 / DSM 16087 / CCUG 44356 / LMG 19182 / AMMD) (Burkholderia cepacia (strain AMMD)) protein is D-alanine--D-alanine ligase.